Consider the following 330-residue polypeptide: Flotillin-like protein FloA (330 aa).

Helical transmembrane passes span 3 to 23 (IISVIVIGGLVLVAIVATLYM) and 26 to 46 (LRLWIAAQASGAGVSMLTLIA).

The protein belongs to the flotillin-like FloA family. In terms of assembly, homooligomerizes.

It is found in the cell membrane. Its subcellular location is the membrane raft. In terms of biological role, found in functional membrane microdomains (FMM) that may be equivalent to eukaryotic membrane rafts. FMMs are highly dynamic and increase in number as cells age. Flotillins are thought to be important factors in membrane fluidity. This is Flotillin-like protein FloA from Sorangium cellulosum (strain So ce56) (Polyangium cellulosum (strain So ce56)).